Reading from the N-terminus, the 113-residue chain is MQFSSAIILSAVAGSALATYANSTVTDIATTVVTITSCEENKCHETEVTTGVTTVTEVETTYTTYCPLPTAKAPVASTSNSTTTPPVSTAEGAAAANAVPAVAAGLLALGAFM.

An N-terminal signal peptide occupies residues 1 to 18; sequence MQFSSAIILSAVAGSALA. N-linked (GlcNAc...) asparagine glycans are attached at residues Asn22 and Asn80. Gly92 carries the GPI-anchor amidated glycine lipid modification. Residues 93–113 constitute a propeptide, removed in mature form; that stretch reads AAAANAVPAVAAGLLALGAFM.

This sequence belongs to the HWP1 family. Post-translationally, N- and O-glycosylated. The GPI-anchor is attached to the protein in the endoplasmic reticulum and serves to target the protein to the cell surface. There, the glucosamine-inositol phospholipid moiety is cleaved off and the GPI-modified mannoprotein is covalently attached via its lipidless GPI glycan remnant to the 1,6-beta-glucan of the outer cell wall layer.

It localises to the secreted. The protein resides in the cell wall. It is found in the membrane. Cell wall protein necessary for cell wall integrity. Plays only a minor role in hyphal morphogenesis and is not critical to biofilm formation. In Candida albicans (strain SC5314 / ATCC MYA-2876) (Yeast), this protein is Cell wall protein PGA59 (PGA59).